A 166-amino-acid chain; its full sequence is Cytochrome c-550 2 (166 aa).

The N-terminal stretch at 1 to 32 is a signal peptide; the sequence is MFSRQFGRLATLALALAVAGCAGGEQSTTAEA. Positions 71, 74, and 75 each coordinate heme c.

This sequence belongs to the cytochrome c family. PsbV subfamily. The cofactor is heme c.

It localises to the cell inner membrane. Its function is as follows. Probable low-potential cytochrome c, might function in photosystem II (PSII). This Gloeobacter violaceus (strain ATCC 29082 / PCC 7421) protein is Cytochrome c-550 2 (psbV2).